The following is a 156-amino-acid chain: Calglandulin (156 aa).

EF-hand domains lie at 8-43 (EQIT…IGIN), 44-79 (PTKR…YHEK), 82-117 (NQDE…AGEP), and 118-153 (LNEH…ESFK). Residues D131, D133, D135, T137, and E142 each contribute to the Ca(2+) site.

The protein belongs to the calmodulin family. Calglandulin subfamily. Expressed by the venom gland.

It is found in the cytoplasm. May be involved in the cellular control mechanism of the secretion of toxins from the gland into the venom. This is Calglandulin from Tropidechis carinatus (Australian rough-scaled snake).